A 696-amino-acid polypeptide reads, in one-letter code: Elongation factor G (696 aa).

In terms of domain architecture, tr-type G spans 8-288; it reads EDYRNFGIMA…AVVEYLPSPA (281 aa). GTP is bound by residues 17–24, 86–90, and 140–143; these read AHIDAGKT, DTPGH, and NKMD.

It belongs to the TRAFAC class translation factor GTPase superfamily. Classic translation factor GTPase family. EF-G/EF-2 subfamily.

The protein localises to the cytoplasm. Functionally, catalyzes the GTP-dependent ribosomal translocation step during translation elongation. During this step, the ribosome changes from the pre-translocational (PRE) to the post-translocational (POST) state as the newly formed A-site-bound peptidyl-tRNA and P-site-bound deacylated tRNA move to the P and E sites, respectively. Catalyzes the coordinated movement of the two tRNA molecules, the mRNA and conformational changes in the ribosome. This is Elongation factor G from Mesorhizobium japonicum (strain LMG 29417 / CECT 9101 / MAFF 303099) (Mesorhizobium loti (strain MAFF 303099)).